Reading from the N-terminus, the 101-residue chain is NAD(P)H-quinone oxidoreductase subunit 4L, chloroplastic (101 aa).

The next 3 membrane-spanning stretches (helical) occupy residues 2–22, 30–52, and 61–81; these read ILEHVLVLSAYLFSIGIYGLI, ALMCLELLLNSVNLNFVTFSDFF, and IFSIFIIAIAAAEATIGLAIV.

The protein belongs to the complex I subunit 4L family. In terms of assembly, NDH is composed of at least 16 different subunits, 5 of which are encoded in the nucleus.

It is found in the plastid. Its subcellular location is the chloroplast thylakoid membrane. The catalysed reaction is a plastoquinone + NADH + (n+1) H(+)(in) = a plastoquinol + NAD(+) + n H(+)(out). The enzyme catalyses a plastoquinone + NADPH + (n+1) H(+)(in) = a plastoquinol + NADP(+) + n H(+)(out). Its function is as follows. NDH shuttles electrons from NAD(P)H:plastoquinone, via FMN and iron-sulfur (Fe-S) centers, to quinones in the photosynthetic chain and possibly in a chloroplast respiratory chain. The immediate electron acceptor for the enzyme in this species is believed to be plastoquinone. Couples the redox reaction to proton translocation, and thus conserves the redox energy in a proton gradient. The polypeptide is NAD(P)H-quinone oxidoreductase subunit 4L, chloroplastic (Oenothera glazioviana (Large-flowered evening primrose)).